The sequence spans 522 residues: F-box only protein 7 (522 aa).

Residues 1-88 (MRLRVRLLKR…QDDIPAPNIP (88 aa)) are ubiquitin-like. The interval 85 to 144 (PNIPSSTDSEHSSLQNNEQPSLATSSNQTSMQDEQPSDSFQGQAAQSGVWNDDSMLGPSQ) is disordered. Over residues 87-133 (IPSSTDSEHSSLQNNEQPSLATSSNQTSMQDEQPSDSFQGQAAQSGV) the composition is skewed to polar residues. The tract at residues 92-129 (DSEHSSLQNNEQPSLATSSNQTSMQDEQPSDSFQGQAA) is important for interaction with PINK1. The interval 129-169 (AQSGVWNDDSMLGPSQNFEAESIQDNAHMAEGTGFYPSEPM) is important for interaction with CDK6. An important for dimerization and interaction with PSMF1 region spans residues 180-324 (PHSLETLYQS…PLLAFTRQAL (145 aa)). The F-box domain occupies 329-375 (VFGLVVLPLELKLRIFRLLDVRSVLSLSAVCRDLFTASNDPLLWRFL). An important for interaction with CDK6 region spans residues 381 to 522 (RDNTVRVQDT…RPTDGRLSFM (142 aa)). Omega-N-methylarginine occurs at positions 432 and 451. The short motif at 481 to 484 (RFDP) is the RFDP motif element. Residues 483–522 (DPVGPLPGPNPILPGRGGPNDRFPFRPSRGRPTDGRLSFM) form a disordered region. Position 518 is an asymmetric dimethylarginine (Arg-518).

Part of the SCF (SKP1-CUL1-F-box) E3 ubiquitin-protein ligase complex SCF(FBXO7) formed of CUL1, SKP1, RBX1 and FBXO7. Interacts via its C-terminal proline-rich region with DLGAP5. Interacts with BIRC2. Interacts with CDK6 and promotes its interaction with D-type cyclin. Interacts with PSMF1. As to quaternary structure, interacts (via the N-terminal Ubl domain) with PRKN. Interact (via N-terminal region) with PINK1. In terms of assembly, interact (via N-terminal region) with PINK1.

The protein resides in the cytoplasm. Its subcellular location is the nucleus. It is found in the mitochondrion. The protein localises to the cytosol. Its pathway is protein modification; protein ubiquitination. In terms of biological role, substrate recognition component of a SCF (SKP1-CUL1-F-box protein) E3 ubiquitin-protein ligase complex which mediates the ubiquitination and subsequent proteasomal degradation of target proteins and plays a role in several biological processes such as cell cycle, cell proliferation, or maintenance of chromosome stability. Recognizes and ubiquitinates BIRC2 and the cell cycle regulator DLGAP5. Plays a role downstream of PINK1 in the clearance of damaged mitochondria via selective autophagy (mitophagy) by targeting PRKN to dysfunctional depolarized mitochondria. Promotes MFN1 ubiquitination. Mediates the ubiquitination and proteasomal degradation of UXT isoform 2, thereby impairing the NF-kappa-B signaling pathway. Inhibits NF-kappa-B pathway also by promoting the ubiquitination of TRAF2. Affects the assembly state and activity of the proteasome in the cells including neurons by ubiquitinating the proteasomal subunit PSMA2 via 'Lys-63'-linked polyubiquitin chains. Promotes 'Lys-48'-linked polyubiquitination SIRT7, leading to the hydrogen peroxide-induced cell death. In Homo sapiens (Human), this protein is F-box only protein 7 (FBXO7).